Consider the following 207-residue polypeptide: MQNYQQPLRVGVGGPVGSGKTALLEALCKAMRDHYQIAVVTNDIYTKEDQRILTEAGALEPERIVGVETGGCPHTAIREDASMNLAAVEALAKKFGNLEVIFVESGGDNLSATFSPELADLTIYVIDVAEGEKIPRKGGPGITKSDFLVINKTDLAPYVGASLEVMERDTERMRPERPWTFSNLKKGEGLQAVIDFIVERGMLGVRG.

Residue 14 to 21 (GPVGSGKT) coordinates GTP.

Belongs to the SIMIBI class G3E GTPase family. UreG subfamily. As to quaternary structure, homodimer. UreD, UreF and UreG form a complex that acts as a GTP-hydrolysis-dependent molecular chaperone, activating the urease apoprotein by helping to assemble the nickel containing metallocenter of UreC. The UreE protein probably delivers the nickel.

The protein localises to the cytoplasm. Facilitates the functional incorporation of the urease nickel metallocenter. This process requires GTP hydrolysis, probably effectuated by UreG. The chain is Urease accessory protein UreG from Pseudomonas entomophila (strain L48).